A 211-amino-acid chain; its full sequence is Claudin-1 (211 aa).

The Cytoplasmic segment spans residues 1–7 (MANAGLQ). A helical membrane pass occupies residues 8–28 (LLGFILASLGWIGSIVSTALP). At 29–81 (QWKIYSYAGDNIVTAQAIYEGLWMSCVSQSTGQIQCKVFDSLLNLNSTLQATR) the chain is on the extracellular side. A disulfide bridge links cysteine 54 with cysteine 64. The chain crosses the membrane as a helical span at residues 82–102 (ALMVIGILLGLIAIFVSTIGM). At 103-115 (KCMRCLEDDEVQK) the chain is on the cytoplasmic side. A helical transmembrane segment spans residues 116–136 (MWMAVIGGIIFVISGLATLVA). The Extracellular portion of the chain corresponds to 137–163 (TAWYGNRIVQEFYDPMTPVNARYEFGQ). The helical transmembrane segment at 164 to 184 (ALFTGWAAASLCLLGGALLSC) threads the bilayer. The Cytoplasmic segment spans residues 185–211 (SCPRKTTSYPTPRPYPKPTPSSGKDYV). The tract at residues 190–211 (TTSYPTPRPYPKPTPSSGKDYV) is disordered. The segment at 210–211 (YV) is interactions with TJP1, TJP2, TJP3 and PATJ.

This sequence belongs to the claudin family. As to quaternary structure, can form homo- and heteropolymers with other CLDN. Homopolymers interact with CLDN3, but not CLDN2, homopolymers. Directly interacts with TJP1/ZO-1, TJP2/ZO-2 and TJP3/ZO-3. Interacts with MPDZ and PATJ. Interacts with OCLN, CD81, CLDN4, CLDN6 and CLDN9. Detected in epididymis (at protein level). Detected in testis and epididymis.

The protein resides in the cell junction. Its subcellular location is the tight junction. It localises to the cell membrane. The protein localises to the basolateral cell membrane. Functionally, claudins function as major constituents of the tight junction complexes that regulate the permeability of epithelia. While some claudin family members play essential roles in the formation of impermeable barriers, others mediate the permeability to ions and small molecules. Often, several claudin family members are coexpressed and interact with each other, and this determines the overall permeability. CLDN1 is required to prevent the paracellular diffusion of small molecules through tight junctions in the epidermis and is required for the normal barrier function of the skin. Required for normal water homeostasis and to prevent excessive water loss through the skin, probably via an indirect effect on the expression levels of other proteins, since CLDN1 itself seems to be dispensable for water barrier formation in keratinocyte tight junctions. In Rattus norvegicus (Rat), this protein is Claudin-1 (Cldn1).